The sequence spans 154 residues: MEKTVEIYTDGSCLGNPGPGGYGIFMIYNEHEKKLSQGYKLTTNNRMEMLGAIVALEVLTRPCVINITTDSQYVKQGIESWITNWKKRGWLTSAKKPVKNVDLWKRLDLACAKHTVTWKWVKGHSGHKYNEIVDDLARDAAGSKDLLDDVGYQP.

Residues 1 to 142 (MEKTVEIYTD…VDDLARDAAG (142 aa)) enclose the RNase H type-1 domain. Positions 10, 48, 70, and 134 each coordinate Mg(2+).

This sequence belongs to the RNase H family. As to quaternary structure, monomer. Mg(2+) is required as a cofactor.

The protein resides in the cytoplasm. It catalyses the reaction Endonucleolytic cleavage to 5'-phosphomonoester.. Functionally, endonuclease that specifically degrades the RNA of RNA-DNA hybrids. The sequence is that of Ribonuclease H from Pseudoalteromonas translucida (strain TAC 125).